The primary structure comprises 643 residues: Mitochondrial Rho GTPase 2 (643 aa).

Residues 1–611 are Cytoplasmic-facing; that stretch reads MMLGGKSSAG…SGRRSRNIRQ (611 aa). In terms of domain architecture, Miro 1 spans 12-179; it reads RTSLRVAVAG…FYFASKAVLH (168 aa). EF-hand domains follow at residues 195–230 and 315–350; these read RLRR…CFGA and EAMD…APDS. Positions 208, 210, 212, 219, 328, 330, 332, and 339 each coordinate Ca(2+). The 170-residue stretch at 423 to 592 folds into the Miro 2 domain; that stretch reads RNVFQCFVFG…FSRIVSTAEN (170 aa). Residues 612-632 form a helical membrane-spanning segment; the sequence is LVNSSLLFVSVGTAVGFAGLA. Residues 633–643 are Mitochondrial intermembrane-facing; the sequence is AYRAYSARKNA.

It belongs to the mitochondrial Rho GTPase family. In terms of tissue distribution, expressed roots, rosette and cauline leaves, stems, flowers and siliques.

It localises to the mitochondrion outer membrane. With respect to regulation, activated by calcium. Functionally, calcium-binding mitochondrial GTPase involved in calcium signaling during salt stress response. May play a role in the progression of embryonic cell division, development of haploid male and female gametes, and pollen tube growth. The protein is Mitochondrial Rho GTPase 2 of Arabidopsis thaliana (Mouse-ear cress).